Here is a 228-residue protein sequence, read N- to C-terminus: Ribonuclease 3 (228 aa).

The 126-residue stretch at 7–132 folds into the RNase III domain; it reads LSAFMDRLGH…VIAAVYLDAG (126 aa). Glu45 serves as a coordination point for Mg(2+). Asp49 is a catalytic residue. Asp118 and Glu121 together coordinate Mg(2+). The active site involves Glu121. The region spanning 157 to 226 is the DRBM domain; that stretch reads DPKTALQEWA…AKALLERLER (70 aa).

Belongs to the ribonuclease III family. As to quaternary structure, homodimer. Requires Mg(2+) as cofactor.

The protein resides in the cytoplasm. The enzyme catalyses Endonucleolytic cleavage to 5'-phosphomonoester.. Its function is as follows. Digests double-stranded RNA. Involved in the processing of ribosomal RNA precursors and of some mRNAs. Complements an E.coli disruption mutant, but the E.coli enzyme does not cleave R.capsulatus rRNA precursor, showing substrate recognition is different. Probably also processes some mRNAs, and tRNAs when they are encoded in the rRNA operon. Probably processes pre-crRNA and tracrRNA of type II CRISPR loci if present in the organism. This Rhodobacter capsulatus (Rhodopseudomonas capsulata) protein is Ribonuclease 3 (rnc).